The following is a 450-amino-acid chain: Bifunctional apoptosis regulator (450 aa).

Positions 1-20 are disordered; it reads MEEPQKSYVNTMDLERDEPL. Residues 1-140 lie on the Cytoplasmic side of the membrane; that stretch reads MEEPQKSYVN…PNTGRANQQM (140 aa). The RING-type zinc-finger motif lies at 34 to 74; the sequence is CHCCYDILVNPTTLNCGHSFCRHCLALWWASSKKTECPECR. The helical transmembrane segment at 141 to 161 threads the bilayer; it reads GGGFFSGVLTALTGVAVVLLV. Over 162 to 331 the chain is Lumenal; it reads YHWSSRESEH…KEPTWKQWRE (170 aa). The SAM domain occupies 182-249; the sequence is WTAEEVVLWL…LMELERVKAL (68 aa). An N-linked (GlcNAc...) asparagine glycan is attached at Asn232. A helical transmembrane segment spans residues 332–352; that stretch reads FLVKYSFLPYQLIAEFAWDWL. The Cytoplasmic segment spans residues 353–360; sequence EVHYWTSR. Residues 361-381 form a helical membrane-spanning segment; sequence FLIINAMLLSVLELFSFWRIW. The Lumenal portion of the chain corresponds to 382 to 404; the sequence is SRSELKTVPQRMWSHFWKVSTQG. Residues 405-425 traverse the membrane as a helical segment; the sequence is LFVAMFWPLIPQFVCNCLFYW. Residues 426–450 are Cytoplasmic-facing; that stretch reads ALYFNPIINIDLVVKELRRLETQVL.

Interacts with CASP8, BCL2 and BCL2L1 through SAM domain and also with HIP1, IFT57, ESRRBL1 and BCAP31. Interacts with NGFR; this interaction inhibits NF-kappa-B and JNK-related signaling pathways. In terms of processing, mediates RING-dependent self-ubiquitination leading to proteasomal degradation. As to expression, expressed highly in brain, moderately in small intestine, weakly in testes and only faintly in liver and skeletal muscle. Not expressed in heart, kidney, lung and spleen.

It localises to the endoplasmic reticulum membrane. The catalysed reaction is S-ubiquitinyl-[E2 ubiquitin-conjugating enzyme]-L-cysteine + [acceptor protein]-L-lysine = [E2 ubiquitin-conjugating enzyme]-L-cysteine + N(6)-ubiquitinyl-[acceptor protein]-L-lysine.. In terms of biological role, membrane-bound E3 ubiquitin ligase that plays a role in several processes including apoptosis regulation or reticulum endoplasmic stress. Has anti-apoptotic activity, both for apoptosis triggered via death-receptors and via mitochondrial factors. Contributes to the dynamic control of IRE1/ERN1 signaling during ER stress by inducing BAX inhibitor 1/TMBIM6 proteasomal degradation. Promotes the activation of TGF-beta signaling by mediating the 'Lys-63'-linked ubiquitination of TGFBR1 which is critical to activate the pathway. Together with NGFR, negatively regulates NF-kappa-B and JNK-related signaling pathways. Promotes the proteasome-mediated degradation of PNPLA3, a protein involveld in lipid metabolism. The protein is Bifunctional apoptosis regulator (BFAR) of Homo sapiens (Human).